Reading from the N-terminus, the 290-residue chain is Ribosomal RNA small subunit methyltransferase A (290 aa).

S-adenosyl-L-methionine-binding residues include Asn-27, Leu-29, Gly-54, Glu-75, Asp-100, and Asn-125.

This sequence belongs to the class I-like SAM-binding methyltransferase superfamily. rRNA adenine N(6)-methyltransferase family. RsmA subfamily.

The protein resides in the cytoplasm. It carries out the reaction adenosine(1518)/adenosine(1519) in 16S rRNA + 4 S-adenosyl-L-methionine = N(6)-dimethyladenosine(1518)/N(6)-dimethyladenosine(1519) in 16S rRNA + 4 S-adenosyl-L-homocysteine + 4 H(+). Functionally, specifically dimethylates two adjacent adenosines (A1518 and A1519) in the loop of a conserved hairpin near the 3'-end of 16S rRNA in the 30S particle. May play a critical role in biogenesis of 30S subunits. This is Ribosomal RNA small subunit methyltransferase A from Streptococcus pyogenes serotype M1.